The primary structure comprises 154 residues: Ribonuclease HI (154 aa).

Residues 1 to 142 (MQKQIEIFTD…CDQLAKAGAE (142 aa)) enclose the RNase H type-1 domain. The Mg(2+) site is built by Asp10, Glu48, Asp70, and Asp134.

It belongs to the RNase H family. Monomer. It depends on Mg(2+) as a cofactor.

It is found in the cytoplasm. The enzyme catalyses Endonucleolytic cleavage to 5'-phosphomonoester.. Its function is as follows. Endonuclease that specifically degrades the RNA of RNA-DNA hybrids. The sequence is that of Ribonuclease HI (rnhA) from Pasteurella multocida (strain Pm70).